A 217-amino-acid polypeptide reads, in one-letter code: Protein GrpE (217 aa).

Belongs to the GrpE family. In terms of assembly, homodimer.

The protein localises to the cytoplasm. In terms of biological role, participates actively in the response to hyperosmotic and heat shock by preventing the aggregation of stress-denatured proteins, in association with DnaK and GrpE. It is the nucleotide exchange factor for DnaK and may function as a thermosensor. Unfolded proteins bind initially to DnaJ; upon interaction with the DnaJ-bound protein, DnaK hydrolyzes its bound ATP, resulting in the formation of a stable complex. GrpE releases ADP from DnaK; ATP binding to DnaK triggers the release of the substrate protein, thus completing the reaction cycle. Several rounds of ATP-dependent interactions between DnaJ, DnaK and GrpE are required for fully efficient folding. The protein is Protein GrpE of Mycoplasma genitalium (strain ATCC 33530 / DSM 19775 / NCTC 10195 / G37) (Mycoplasmoides genitalium).